Consider the following 172-residue polypeptide: 3-hydroxydecanoyl-[acyl-carrier-protein] dehydratase (172 aa).

Residue His-71 is part of the active site.

The protein belongs to the thioester dehydratase family. FabA subfamily. In terms of assembly, homodimer.

It is found in the cytoplasm. It catalyses the reaction a (3R)-hydroxyacyl-[ACP] = a (2E)-enoyl-[ACP] + H2O. The enzyme catalyses (3R)-hydroxydecanoyl-[ACP] = (2E)-decenoyl-[ACP] + H2O. The catalysed reaction is (2E)-decenoyl-[ACP] = (3Z)-decenoyl-[ACP]. It participates in lipid metabolism; fatty acid biosynthesis. In terms of biological role, necessary for the introduction of cis unsaturation into fatty acids. Catalyzes the dehydration of (3R)-3-hydroxydecanoyl-ACP to E-(2)-decenoyl-ACP and then its isomerization to Z-(3)-decenoyl-ACP. Can catalyze the dehydratase reaction for beta-hydroxyacyl-ACPs with saturated chain lengths up to 16:0, being most active on intermediate chain length. This Escherichia fergusonii (strain ATCC 35469 / DSM 13698 / CCUG 18766 / IAM 14443 / JCM 21226 / LMG 7866 / NBRC 102419 / NCTC 12128 / CDC 0568-73) protein is 3-hydroxydecanoyl-[acyl-carrier-protein] dehydratase.